The chain runs to 464 residues: Argininosuccinate lyase (464 aa).

This sequence belongs to the lyase 1 family. Argininosuccinate lyase subfamily.

Its subcellular location is the cytoplasm. It catalyses the reaction 2-(N(omega)-L-arginino)succinate = fumarate + L-arginine. It functions in the pathway amino-acid biosynthesis; L-arginine biosynthesis; L-arginine from L-ornithine and carbamoyl phosphate: step 3/3. This is Argininosuccinate lyase from Desulfotalea psychrophila (strain LSv54 / DSM 12343).